The primary structure comprises 314 residues: uncharacterized protein (314 aa).

The N-terminal stretch at 1–18 (MKVSLLIFLIILVGVIKS) is a signal peptide. Asn43, Asn96, Asn109, Asn116, Asn117, and Asn161 each carry an N-linked (GlcNAc...) asparagine glycan. The tract at residues 252–314 (SMRITKNNPH…PKSIDFHHLF (63 aa)) is disordered. Low complexity-rich tracts occupy residues 257–268 (KNNPHLNNNNNN) and 285–296 (KTTTKTSTKTTS).

The protein resides in the secreted. This is an uncharacterized protein from Dictyostelium discoideum (Social amoeba).